The following is a 329-amino-acid chain: R-linalool synthase (329 aa).

Position 79 (aspartate 79) interacts with Mg(2+). Positions 79 to 83 (DDQFD) match the DDXXD motif motif. Position 172 (arginine 172) interacts with substrate. Asparagine 218 and serine 222 together coordinate Mg(2+). The short motif at 218–226 (NELHSFEKD) is the NXXXSXXXD motif element. Lysine 225 lines the substrate pocket. Aspartate 226 lines the Mg(2+) pocket. 308-309 (RY) provides a ligand contact to substrate.

It belongs to the terpene synthase family. Homodimer. The cofactor is Mg(2+).

The catalysed reaction is (2E)-geranyl diphosphate + H2O = (R)-linalool + diphosphate. It catalyses the reaction (2E,6E)-farnesyl diphosphate + H2O = (6E)-nerolidol + diphosphate. Its function is as follows. In vitro, catalyzes the formation of R-linalool from geranyl diphosphate (GPP). Can also accept farnesyl diphosphate (FPP) as substrate to produce trans-nerolidol. The polypeptide is R-linalool synthase (Streptomyces clavuligerus).